The primary structure comprises 629 residues: tRNA uridine 5-carboxymethylaminomethyl modification enzyme MnmG (629 aa).

Residues 13–18, Val-125, and Ser-180 contribute to the FAD site; that span reads GGGHAG. Position 273–287 (273–287) interacts with NAD(+); it reads GPRYCPSIEDKVMRF. Gln-370 is an FAD binding site.

It belongs to the MnmG family. In terms of assembly, homodimer. Heterotetramer of two MnmE and two MnmG subunits. FAD serves as cofactor.

The protein localises to the cytoplasm. NAD-binding protein involved in the addition of a carboxymethylaminomethyl (cmnm) group at the wobble position (U34) of certain tRNAs, forming tRNA-cmnm(5)s(2)U34. The polypeptide is tRNA uridine 5-carboxymethylaminomethyl modification enzyme MnmG (Escherichia coli O157:H7).